Reading from the N-terminus, the 342-residue chain is Aspartate carbamoyltransferase catalytic subunit (342 aa).

2 residues coordinate carbamoyl phosphate: arginine 59 and threonine 60. Lysine 87 provides a ligand contact to L-aspartate. 3 residues coordinate carbamoyl phosphate: arginine 109, histidine 142, and glutamine 145. L-aspartate-binding residues include arginine 182 and arginine 253. Residues glycine 294 and proline 295 each coordinate carbamoyl phosphate.

Belongs to the aspartate/ornithine carbamoyltransferase superfamily. ATCase family. As to quaternary structure, heterododecamer (2C3:3R2) of six catalytic PyrB chains organized as two trimers (C3), and six regulatory PyrI chains organized as three dimers (R2).

It carries out the reaction carbamoyl phosphate + L-aspartate = N-carbamoyl-L-aspartate + phosphate + H(+). It participates in pyrimidine metabolism; UMP biosynthesis via de novo pathway; (S)-dihydroorotate from bicarbonate: step 2/3. In terms of biological role, catalyzes the condensation of carbamoyl phosphate and aspartate to form carbamoyl aspartate and inorganic phosphate, the committed step in the de novo pyrimidine nucleotide biosynthesis pathway. The chain is Aspartate carbamoyltransferase catalytic subunit from Synechococcus sp. (strain WH7803).